The sequence spans 322 residues: MPVHSREKKESNHNDMEVDYPENEGSSSEEDDSDSSSGSEEGDSSEMDDEDCERRRMECLDEMSTLEKQFTDLKDQLYKERLSQVDAKLQEVKADQAQEYLEPLANLQENMQIRTKVAGIYRELCLESVKNKHDCEIQAARQHCESEKLLLYDTVQSELEEKIRRLEEDRHSIDITSELWNDELQSRRKRKDPFSPDKKKKPVVVSGPYIVYMLQDLDILEDWTTIRKAMASFGPHRVKPEVTVKIEKHQHSARSEEGRLHYDGEWYGRGQTICIDKKDEFPTSAVITTINSDEVWFKRQDGSKSKLYISQLQKGKYSIKHI.

The span at Met-1–Met-16 shows a compositional bias: basic and acidic residues. The disordered stretch occupies residues Met-1 to Arg-56. Acidic residues predominate over residues Glu-17 to Asp-51. 2 coiled-coil regions span residues Glu-50–Glu-99 and Glu-147–Glu-178.

The protein belongs to the BRMS1 family.

The protein resides in the nucleus. Its function is as follows. Involved in the histone deacetylase (HDAC1)-dependent transcriptional repression activity. This chain is Breast cancer metastasis-suppressor 1-like protein (brms1l), found in Xenopus laevis (African clawed frog).